Reading from the N-terminus, the 914-residue chain is DNA mismatch repair protein MutS (914 aa).

The interval 1–24 (MDNKTDNKNNLTPQSAPSSAPHKE) is disordered. The span at 8–18 (KNNLTPQSAPS) shows a compositional bias: polar residues. Position 662 to 669 (662 to 669 (GPNMGGKS)) interacts with ATP.

The protein belongs to the DNA mismatch repair MutS family.

Functionally, this protein is involved in the repair of mismatches in DNA. It is possible that it carries out the mismatch recognition step. This protein has a weak ATPase activity. This Bartonella henselae (strain ATCC 49882 / DSM 28221 / CCUG 30454 / Houston 1) (Rochalimaea henselae) protein is DNA mismatch repair protein MutS.